Consider the following 642-residue polypeptide: Threonine--tRNA ligase (642 aa).

In terms of domain architecture, TGS spans 1–61 (MPVITLPDGS…SEDANLVIFT (61 aa)). A catalytic region spans residues 243-534 (DHRKLAKKFD…LIEHYEGSFP (292 aa)). The Zn(2+) site is built by Cys334, His385, and His511.

The protein belongs to the class-II aminoacyl-tRNA synthetase family. In terms of assembly, homodimer. Zn(2+) is required as a cofactor.

Its subcellular location is the cytoplasm. It carries out the reaction tRNA(Thr) + L-threonine + ATP = L-threonyl-tRNA(Thr) + AMP + diphosphate + H(+). Its function is as follows. Catalyzes the attachment of threonine to tRNA(Thr) in a two-step reaction: L-threonine is first activated by ATP to form Thr-AMP and then transferred to the acceptor end of tRNA(Thr). Also edits incorrectly charged L-seryl-tRNA(Thr). The polypeptide is Threonine--tRNA ligase (Cellvibrio japonicus (strain Ueda107) (Pseudomonas fluorescens subsp. cellulosa)).